The following is a 475-amino-acid chain: Ribulose bisphosphate carboxylase large chain (475 aa).

Residues 1 to 2 (MS) constitute a propeptide that is removed on maturation. The residue at position 3 (Pro3) is an N-acetylproline. Position 14 is an N6,N6,N6-trimethyllysine (Lys14). Substrate-binding residues include Asn123 and Thr173. The active-site Proton acceptor is the Lys175. Lys177 contacts substrate. Residues Lys201, Asp203, and Glu204 each contribute to the Mg(2+) site. Lys201 bears the N6-carboxylysine mark. The Proton acceptor role is filled by His294. Residues Arg295, His327, and Ser379 each contribute to the substrate site.

The protein belongs to the RuBisCO large chain family. Type I subfamily. Heterohexadecamer of 8 large chains and 8 small chains; disulfide-linked. The disulfide link is formed within the large subunit homodimers. Mg(2+) serves as cofactor. The disulfide bond which can form in the large chain dimeric partners within the hexadecamer appears to be associated with oxidative stress and protein turnover.

The protein localises to the plastid. The protein resides in the chloroplast. The catalysed reaction is 2 (2R)-3-phosphoglycerate + 2 H(+) = D-ribulose 1,5-bisphosphate + CO2 + H2O. It carries out the reaction D-ribulose 1,5-bisphosphate + O2 = 2-phosphoglycolate + (2R)-3-phosphoglycerate + 2 H(+). Its function is as follows. RuBisCO catalyzes two reactions: the carboxylation of D-ribulose 1,5-bisphosphate, the primary event in carbon dioxide fixation, as well as the oxidative fragmentation of the pentose substrate in the photorespiration process. Both reactions occur simultaneously and in competition at the same active site. In Corylus cornuta (Beaked hazel), this protein is Ribulose bisphosphate carboxylase large chain.